Reading from the N-terminus, the 421-residue chain is Nucleoprotein (421 aa).

Over residues 1–11 (MSDNGPQSQRS) the composition is skewed to polar residues. Disordered stretches follow at residues 1–50 (MSDN…NNTA) and 63–82 (ELRF…GKDD). The interval 41 to 186 (RPQGLPNNTA…RGGSQSSSRS (146 aa)) is RNA-binding. The 128-residue stretch at 48–175 (NTASWFTALT…TLPKGFYAEG (128 aa)) folds into the CoV N NTD domain. Residues R92, R107, and R149 each contribute to the RNA site. Disordered regions lie at residues 168 to 212 (PKGF…RLAS), 233 to 271 (KVSG…YNVT), and 361 to 421 (KTFP…STQA). Phosphoserine; by host is present on S176. The segment covering 179–212 (GSQSSSRSSSRSRGNSRNSTPGSSRGSSPARLAS) has biased composition (low complexity). Residues 237–248 (KGQQQPGQTVTK) are compositionally biased toward polar residues. A CoV N CTD domain is found at 247 to 364 (TKKSAAEASK…KHIDAYKTFP (118 aa)). The tract at residues 258 to 361 (PRQKRTATKQ…LLNKHIDAYK (104 aa)) is dimerization. Residues 367-378 (EPKKDKKKKTDE) show a composition bias toward basic and acidic residues. The segment covering 405–421 (RQLQHSMSGASADSTQA) has biased composition (polar residues).

The protein belongs to the betacoronavirus nucleocapsid protein family. As to quaternary structure, homooligomer. Both monomeric and oligomeric forms interact with RNA. Interacts with protein M. Interacts with NSP3; this interaction serves to tether the genome to the newly translated replicase-transcriptase complex at a very early stage of infection. Post-translationally, ADP-ribosylated. The ADP-ribosylation is retained in the virion during infection. In terms of processing, phosphorylated on serine and threonine residues.

It is found in the virion. The protein localises to the host endoplasmic reticulum-Golgi intermediate compartment. Its subcellular location is the host Golgi apparatus. In terms of biological role, packages the positive strand viral genome RNA into a helical ribonucleocapsid (RNP) and plays a fundamental role during virion assembly through its interactions with the viral genome and membrane protein M. Plays an important role in enhancing the efficiency of subgenomic viral RNA transcription as well as viral replication. This chain is Nucleoprotein, found in Rhinolophus sinicus (Chinese rufous horseshoe bat).